A 167-amino-acid polypeptide reads, in one-letter code: NADH-quinone oxidoreductase subunit I 1 (167 aa).

4Fe-4S ferredoxin-type domains follow at residues 52–82 (LQRDVNGMEKCVACFLCAAACPSNCIYIEAA) and 98–127 (KVYNIDYNRCIFCGYCVEACPTDAITHGHG). Positions 62, 65, 68, 72, 107, 110, 113, and 117 each coordinate [4Fe-4S] cluster. The disordered stretch occupies residues 148-167 (PVPPGAKPPSMADEVPAGAH).

Belongs to the complex I 23 kDa subunit family. In terms of assembly, NDH-1 is composed of 14 different subunits. Subunits NuoA, H, J, K, L, M, N constitute the membrane sector of the complex. [4Fe-4S] cluster is required as a cofactor.

The protein resides in the cell inner membrane. It catalyses the reaction a quinone + NADH + 5 H(+)(in) = a quinol + NAD(+) + 4 H(+)(out). In terms of biological role, NDH-1 shuttles electrons from NADH, via FMN and iron-sulfur (Fe-S) centers, to quinones in the respiratory chain. The immediate electron acceptor for the enzyme in this species is believed to be ubiquinone. Couples the redox reaction to proton translocation (for every two electrons transferred, four hydrogen ions are translocated across the cytoplasmic membrane), and thus conserves the redox energy in a proton gradient. The chain is NADH-quinone oxidoreductase subunit I 1 from Solibacter usitatus (strain Ellin6076).